The primary structure comprises 283 residues: Elongation factor Ts (283 aa).

Residues 80–83 (TDFV) are involved in Mg(2+) ion dislocation from EF-Tu.

Belongs to the EF-Ts family.

It is found in the cytoplasm. Functionally, associates with the EF-Tu.GDP complex and induces the exchange of GDP to GTP. It remains bound to the aminoacyl-tRNA.EF-Tu.GTP complex up to the GTP hydrolysis stage on the ribosome. The chain is Elongation factor Ts from Pectobacterium atrosepticum (strain SCRI 1043 / ATCC BAA-672) (Erwinia carotovora subsp. atroseptica).